A 94-amino-acid polypeptide reads, in one-letter code: Na(+)/H(+) antiporter subunit F (94 aa).

Helical transmembrane passes span F2–I22, V34–L54, and A59–S79.

This sequence belongs to the CPA3 antiporters (TC 2.A.63) subunit F family. Forms a heterooligomeric complex that consists of seven subunits: MrpA, MrpB, MrpC, MrpD, MrpE, MrpF and MrpG.

The protein localises to the cell membrane. In terms of biological role, mrp complex is a Na(+)/H(+) antiporter that is considered to be the major Na(+) excretion system in B.subtilis. Has a major role in Na(+) resistance and a minor role in Na(+)- and K(+)-dependent pH homeostasis as compared to TetB. MrpA may be the actual Na(+)/H(+) antiporter, although the six other Mrp proteins are all required for Na(+)/H(+) antiport activity and Na(+) resistance. MrpA is required for initiation of sporulation when external Na(+) concentration increases. Also transports Li(+) but not K(+), Ca(2+) or Mg(2+). Functionally, involved in cholate and Na(+) efflux activities, which may be mechanistically coupled. Does not require other Mrp proteins for its own function. This Bacillus subtilis (strain 168) protein is Na(+)/H(+) antiporter subunit F (mrpF).